The primary structure comprises 388 residues: Protein DJ-1 homolog D (388 aa).

PfpI endopeptidase domains follow at residues 5-190 (RTVL…KALG) and 198-383 (KRIL…ALLG). Catalysis depends on C120, which acts as the Nucleophile. Cysteine sulfenic acid (-SOH) is present on C120. H121 is a catalytic residue. C313 acts as the Nucleophile in catalysis. At C313 the chain carries Cysteine sulfinic acid (-SO2H). The active site involves H314.

It belongs to the peptidase C56 family. As to quaternary structure, homotrimer. In terms of processing, cys-120 and Cys-313 are oxidized to sulfinic acid.

It carries out the reaction (R)-S-lactoylglutathione = methylglyoxal + glutathione. Its function is as follows. Possesses glyoxalase I activity. Catalyzes the conversion of hemimercaptal, formed from methylglyoxal and glutathione, to S-lactoylglutathione. May be involved in oxidative stress response. In Arabidopsis thaliana (Mouse-ear cress), this protein is Protein DJ-1 homolog D (DJ1D).